The primary structure comprises 284 residues: Diaminopimelate epimerase (284 aa).

The substrate site is built by N20, Q53, and N73. C82 functions as the Proton donor in the catalytic mechanism. Residues 83-84 (GN), N167, N200, and 218-219 (ER) contribute to the substrate site. The active-site Proton acceptor is C227. 228-229 (GS) is a substrate binding site.

It belongs to the diaminopimelate epimerase family. In terms of assembly, homodimer.

It localises to the cytoplasm. It catalyses the reaction (2S,6S)-2,6-diaminopimelate = meso-2,6-diaminopimelate. The protein operates within amino-acid biosynthesis; L-lysine biosynthesis via DAP pathway; DL-2,6-diaminopimelate from LL-2,6-diaminopimelate: step 1/1. In terms of biological role, catalyzes the stereoinversion of LL-2,6-diaminopimelate (L,L-DAP) to meso-diaminopimelate (meso-DAP), a precursor of L-lysine and an essential component of the bacterial peptidoglycan. This is Diaminopimelate epimerase from Xylella fastidiosa (strain M23).